The primary structure comprises 74 residues: Brevinin-2MT1 (74 aa).

An N-terminal signal peptide occupies residues 1 to 22 (MFTMKKSLLVLFFLGTISLSLC). Positions 23 to 39 (EEERNADEDDGEMTEEE) are cleaved as a propeptide — removed in mature form. A disulfide bridge connects residues cysteine 68 and cysteine 74.

The protein belongs to the frog skin active peptide (FSAP) family. Brevinin subfamily. As to expression, expressed by the skin glands.

The protein localises to the secreted. Antimicrobial peptide. Active against a variety of Gram-negative and Gram-positive bacterial strains. Active against fungi. Shows hemolytic activity against human erythrocytes. This chain is Brevinin-2MT1, found in Amolops mantzorum (Sichuan torrent frog).